The primary structure comprises 409 residues: Argininosuccinate synthase (409 aa).

ATP contacts are provided by residues 15–23 and Ala42; that span reads AYSGGLDTS. The L-citrulline site is built by Tyr93 and Ser98. Gly123 serves as a coordination point for ATP. L-aspartate contacts are provided by Thr125, Asn129, and Asp130. An L-citrulline-binding site is contributed by Asn129. Residues Arg133, Ser182, Ser191, Glu267, and Tyr279 each contribute to the L-citrulline site.

This sequence belongs to the argininosuccinate synthase family. Type 1 subfamily. In terms of assembly, homotetramer.

The protein localises to the cytoplasm. The catalysed reaction is L-citrulline + L-aspartate + ATP = 2-(N(omega)-L-arginino)succinate + AMP + diphosphate + H(+). Its pathway is amino-acid biosynthesis; L-arginine biosynthesis; L-arginine from L-ornithine and carbamoyl phosphate: step 2/3. This Desulfitobacterium hafniense (strain Y51) protein is Argininosuccinate synthase.